The primary structure comprises 77 residues: Acyl carrier protein (77 aa).

Positions 1–75 (MVFEKVKDII…DVVNYIKAHT (75 aa)) constitute a Carrier domain. O-(pantetheine 4'-phosphoryl)serine is present on S35.

It belongs to the acyl carrier protein (ACP) family. Post-translationally, 4'-phosphopantetheine is transferred from CoA to a specific serine of apo-ACP by AcpS. This modification is essential for activity because fatty acids are bound in thioester linkage to the sulfhydryl of the prosthetic group.

The protein localises to the cytoplasm. It participates in lipid metabolism; fatty acid biosynthesis. Functionally, carrier of the growing fatty acid chain in fatty acid biosynthesis. The protein is Acyl carrier protein of Clostridium acetobutylicum (strain ATCC 824 / DSM 792 / JCM 1419 / IAM 19013 / LMG 5710 / NBRC 13948 / NRRL B-527 / VKM B-1787 / 2291 / W).